The primary structure comprises 434 residues: Glutamate-1-semialdehyde 2,1-aminomutase 1 (434 aa).

N6-(pyridoxal phosphate)lysine is present on K270.

Belongs to the class-III pyridoxal-phosphate-dependent aminotransferase family. HemL subfamily. Homodimer. The cofactor is pyridoxal 5'-phosphate.

The protein resides in the cytoplasm. It carries out the reaction (S)-4-amino-5-oxopentanoate = 5-aminolevulinate. It functions in the pathway porphyrin-containing compound metabolism; protoporphyrin-IX biosynthesis; 5-aminolevulinate from L-glutamyl-tRNA(Glu): step 2/2. The sequence is that of Glutamate-1-semialdehyde 2,1-aminomutase 1 from Bacillus thuringiensis (strain Al Hakam).